We begin with the raw amino-acid sequence, 264 residues long: Adenosylcobinamide-GDP ribazoletransferase (264 aa).

6 consecutive transmembrane segments (helical) span residues 39–59 (IAYA…AILI), 63–83 (ALGL…VLLT), 121–141 (ACAL…LLAL), 148–168 (LALI…LEFL), 201–221 (LLIV…LSVL), and 241–261 (VAGA…LIYA).

The protein belongs to the CobS family. It depends on Mg(2+) as a cofactor.

It is found in the cell inner membrane. The catalysed reaction is alpha-ribazole + adenosylcob(III)inamide-GDP = adenosylcob(III)alamin + GMP + H(+). It carries out the reaction alpha-ribazole 5'-phosphate + adenosylcob(III)inamide-GDP = adenosylcob(III)alamin 5'-phosphate + GMP + H(+). It participates in cofactor biosynthesis; adenosylcobalamin biosynthesis; adenosylcobalamin from cob(II)yrinate a,c-diamide: step 7/7. Its function is as follows. Joins adenosylcobinamide-GDP and alpha-ribazole to generate adenosylcobalamin (Ado-cobalamin). Also synthesizes adenosylcobalamin 5'-phosphate from adenosylcobinamide-GDP and alpha-ribazole 5'-phosphate. The sequence is that of Adenosylcobinamide-GDP ribazoletransferase from Azorhizobium caulinodans (strain ATCC 43989 / DSM 5975 / JCM 20966 / LMG 6465 / NBRC 14845 / NCIMB 13405 / ORS 571).